The sequence spans 79 residues: Sec-independent protein translocase protein TatA (79 aa).

The chain crosses the membrane as a helical span at residues 1–21 (MGGFTSIWHWVIVLLVIVLLF). The interval 48 to 79 (EEEAKNEPKTLDAQATQTKVHESSEIKSKQES) is disordered. Residues 66–79 (KVHESSEIKSKQES) are compositionally biased toward basic and acidic residues.

This sequence belongs to the TatA/E family. The Tat system comprises two distinct complexes: a TatABC complex, containing multiple copies of TatA, TatB and TatC subunits, and a separate TatA complex, containing only TatA subunits. Substrates initially bind to the TatABC complex, which probably triggers association of the separate TatA complex to form the active translocon.

The protein localises to the cell inner membrane. Part of the twin-arginine translocation (Tat) system that transports large folded proteins containing a characteristic twin-arginine motif in their signal peptide across membranes. TatA could form the protein-conducting channel of the Tat system. The chain is Sec-independent protein translocase protein TatA from Helicobacter pylori (strain ATCC 700392 / 26695) (Campylobacter pylori).